The following is a 445-amino-acid chain: FAS-associated factor 2 (445 aa).

Ala-2 bears the N-acetylalanine mark. In terms of domain architecture, UBA spans 12-48; that stretch reads EQTEKLLQFQDLTGIESMDQCRHTLEQHNWNIEAAVQ. Lys-167 is modified (N6-acetyllysine). Residues 275–350 are a coiled coil; it reads SERLEREERN…EEKERKLECL (76 aa). The segment at 299–361 is disordered; the sequence is ASLRADQEKE…PEPSPDDPES (63 aa). Positions 303–348 are enriched in basic and acidic residues; the sequence is ADQEKERKKREERERKRRKEEEVQQQKLAEERRRQNLQEEKERKLE. The UBX domain maps to 357-439; that stretch reads DDPESVKIIF…GLSHTEVLFV (83 aa).

In terms of assembly, identified in a complex that contains SEL1L, OS9, FAF2/UBXD8, UBE2J1/UBC6E and AUP1. Interacts with YOD1. Interacts (via N-terminus) with UBQLN2 (via C-terminus). Interacts with PNPLA2 and UBAC2. Interacts with ZFAND2B; probably through VCP. Interacts with LMBR1L. Broadly expressed, with highest levels in brain.

Its subcellular location is the cytoplasm. It localises to the lipid droplet. The protein localises to the endoplasmic reticulum. In terms of biological role, plays an important role in endoplasmic reticulum-associated degradation (ERAD) that mediates ubiquitin-dependent degradation of misfolded endoplasmic reticulum proteins. By controlling the steady-state expression of the IGF1R receptor, indirectly regulates the insulin-like growth factor receptor signaling pathway. Involved in inhibition of lipid droplet degradation by binding to phospholipase PNPL2 and inhibiting its activity by promoting dissociation of PNPL2 from its endogenous activator, ABHD5 which inhibits the rate of triacylglycerol hydrolysis. Involved in stress granule disassembly: associates with ubiquitinated G3BP1 in response to heat shock, thereby promoting interaction between ubiquitinated G3BP1 and VCP, followed by G3BP1 extraction from stress granules and stress granule disassembly. The polypeptide is FAS-associated factor 2 (Homo sapiens (Human)).